Consider the following 465-residue polypeptide: MDGHNQNQYQNQNQIQQSQQPPLKKYVTQRRSVDVSSPYINLYYNRRHGLPNLVVEPETSYTIDIMPPNAYRGRDRVINLPSKFTHLSSNKVKHVIPAIQWTPEGRRLVVATYSGEFSLWNASSFTFETLMQAHDSAVTTMKYSHDSDWMISGDADGMIKIWQPNFSMVKEIDAAHTESIRDMAFSSNDSKFVTCSDDNILKIWNFSNGKQERVLSGHHWDVKSCDWHPEMGLIASASKDNLVKLWDPRSGNCISSILKFKHTVLKTRFQPTKGNLLMAISKDKSCRVFDIRYSMKELMCVRDETDYMTLEWHPINESMFTLACYDGSLKHFDLLQNLNEPILTIPYAHDKCITSLSYNPVGHIFATAAKDRTIRFWTRARPIDPNAYDDPTYNNKKINGWFFGINNDINAVREKSEFGAAPPPPATLEPHALPNMNGFINKKPRQEIPGIDSNIKSSTLPGLSI.

Residues 1–20 show a composition bias toward low complexity; that stretch reads MDGHNQNQYQNQNQIQQSQQ. The tract at residues 1-26 is disordered; it reads MDGHNQNQYQNQNQIQQSQQPPLKKY. 5 WD repeats span residues 133 to 163, 175 to 205, 217 to 247, 259 to 290, and 348 to 378; these read AHDSAVTTMKYSHDSDWMISGDADGMIKIWQ, AHTESIRDMAFSSNDSKFVTCSDDNILKIWN, GHHWDVKSCDWHPEMGLIASASKDNLVKLWD, KFKHTVLKTRFQPTKGNLLMAISKDKSCRVFD, and AHDKCITSLSYNPVGHIFATAAKDRTIRFWT. The tract at residues 417–465 is disordered; it reads EFGAAPPPPATLEPHALPNMNGFINKKPRQEIPGIDSNIKSSTLPGLSI. Residues 454 to 465 are compositionally biased toward polar residues; the sequence is NIKSSTLPGLSI.

In terms of assembly, component of the cleavage and polyadenylation factor (CPF) complex, which is composed of at least PTI1, SYC1, SSU72, GLC7, MPE1, REF2, PFS2, PTA1, YSH1/BRR5, SWD2, CFT2/YDH1, YTH1, CFT1/YHH1, FIP1 and PAP1. Interacts with YSH1/BRR5, FIP1 and RNA14.

The protein resides in the nucleus. Integral and essential component of the cleavage and polyadenylation factor (CPF) complex, which plays a key role in polyadenylation-dependent pre-mRNA 3'-end formation and cooperates with cleavage factors including the CFIA complex and NAB4/CFIB. May bridge the CPF and CFIA complexes. This chain is Polyadenylation factor subunit 2 (PFS2), found in Saccharomyces cerevisiae (strain ATCC 204508 / S288c) (Baker's yeast).